A 616-amino-acid polypeptide reads, in one-letter code: Dihydroxy-acid dehydratase (616 aa).

Residue D81 coordinates Mg(2+). A [2Fe-2S] cluster-binding site is contributed by C122. Mg(2+)-binding residues include D123 and K124. K124 carries the post-translational modification N6-carboxylysine. Position 195 (C195) interacts with [2Fe-2S] cluster. E491 serves as a coordination point for Mg(2+). S517 serves as the catalytic Proton acceptor.

This sequence belongs to the IlvD/Edd family. In terms of assembly, homodimer. Requires [2Fe-2S] cluster as cofactor. It depends on Mg(2+) as a cofactor.

It catalyses the reaction (2R)-2,3-dihydroxy-3-methylbutanoate = 3-methyl-2-oxobutanoate + H2O. The enzyme catalyses (2R,3R)-2,3-dihydroxy-3-methylpentanoate = (S)-3-methyl-2-oxopentanoate + H2O. Its pathway is amino-acid biosynthesis; L-isoleucine biosynthesis; L-isoleucine from 2-oxobutanoate: step 3/4. The protein operates within amino-acid biosynthesis; L-valine biosynthesis; L-valine from pyruvate: step 3/4. Functions in the biosynthesis of branched-chain amino acids. Catalyzes the dehydration of (2R,3R)-2,3-dihydroxy-3-methylpentanoate (2,3-dihydroxy-3-methylvalerate) into 2-oxo-3-methylpentanoate (2-oxo-3-methylvalerate) and of (2R)-2,3-dihydroxy-3-methylbutanoate (2,3-dihydroxyisovalerate) into 2-oxo-3-methylbutanoate (2-oxoisovalerate), the penultimate precursor to L-isoleucine and L-valine, respectively. The protein is Dihydroxy-acid dehydratase of Shigella flexneri.